Consider the following 425-residue polypeptide: Proline--tRNA ligase (425 aa).

The protein belongs to the class-II aminoacyl-tRNA synthetase family. ProS type 2 subfamily. In terms of assembly, homodimer.

The protein resides in the cytoplasm. The catalysed reaction is tRNA(Pro) + L-proline + ATP = L-prolyl-tRNA(Pro) + AMP + diphosphate. Its function is as follows. Catalyzes the attachment of proline to tRNA(Pro) in a two-step reaction: proline is first activated by ATP to form Pro-AMP and then transferred to the acceptor end of tRNA(Pro). In Wolbachia sp. subsp. Brugia malayi (strain TRS), this protein is Proline--tRNA ligase.